The sequence spans 985 residues: Probable beta-galactosidase C (985 aa).

An N-terminal signal peptide occupies residues Met1–Ala23. Substrate is bound by residues Tyr82, Asn127, Ala128, Glu129, and Asn187. The active-site Proton donor is Glu188. Tyr251 is a substrate binding site. Cysteines 257 and 304 form a disulfide. Asn276 carries an N-linked (GlcNAc...) asparagine glycan. Catalysis depends on Glu287, which acts as the Nucleophile. Tyr353 is a binding site for substrate. Residues Asn391, Asn434, Asn517, Asn602, Asn677, Asn715, Asn720, and Asn759 are each glycosylated (N-linked (GlcNAc...) asparagine).

Belongs to the glycosyl hydrolase 35 family.

Its subcellular location is the secreted. The enzyme catalyses Hydrolysis of terminal non-reducing beta-D-galactose residues in beta-D-galactosides.. Its function is as follows. Cleaves beta-linked terminal galactosyl residues from gangliosides, glycoproteins, and glycosaminoglycans. The sequence is that of Probable beta-galactosidase C (lacC) from Aspergillus clavatus (strain ATCC 1007 / CBS 513.65 / DSM 816 / NCTC 3887 / NRRL 1 / QM 1276 / 107).